A 421-amino-acid polypeptide reads, in one-letter code: Vasopressin V1b receptor (421 aa).

Residues 1 to 35 are Extracellular-facing; sequence MDSEPSWTATPSPGGTLFVPNTTTPWLGRDEELAK. An N-linked (GlcNAc...) asparagine glycan is attached at Asn-21. The chain crosses the membrane as a helical span at residues 36–59; that stretch reads VEIGILATVLVLATGGNLAVLLIL. The Cytoplasmic portion of the chain corresponds to 60 to 71; it reads GLQGHKRSRMHL. A helical membrane pass occupies residues 72 to 93; that stretch reads FVLHLALTDLGVALFQVLPQLL. Residues 94-108 lie on the Extracellular side of the membrane; the sequence is WDITYRFQGSDLLCR. A disulfide bridge links Cys-107 with Cys-186. Residues 109-130 traverse the membrane as a helical segment; that stretch reads AVKYLQVLSMFASTYMLLAMTL. Residues 131–151 lie on the Cytoplasmic side of the membrane; that stretch reads DRYLAVCHPLRSLQQPSQSTY. Residues 152–173 traverse the membrane as a helical segment; it reads PLIAAPWLLAAILSLPQVFIFS. The Extracellular portion of the chain corresponds to 174–202; it reads LREVIQGSGVLDCWADFYFSWGPRAYITW. Residues 203–223 form a helical membrane-spanning segment; that stretch reads TTMAIFVLPVVVLTACYGLIC. Over 224–280 the chain is Cytoplasmic; it reads HEIYKNLKVKTQAGREERRGWPKSSSSAAAAATRGLPSRVSSISTISRAKIRTVKMT. A helical membrane pass occupies residues 281–300; sequence FVIVLAYIACWAPFFSVQMW. Residues 301–318 are Extracellular-facing; it reads SVWDENAPNEDSTNVAFT. The helical transmembrane segment at 319–338 threads the bilayer; it reads ISMLLGNLSSCCNPWIYMGF. Residues 339-421 lie on the Cytoplasmic side of the membrane; that stretch reads NSHLLPRSLS…GEATMETSIS (83 aa). Residues 399-421 form a disordered region; that stretch reads KPAGSLKDLEQVDGEATMETSIS.

Belongs to the G-protein coupled receptor 1 family. Vasopressin/oxytocin receptor subfamily.

Its subcellular location is the cell membrane. Functionally, receptor for arginine vasopressin. The activity of this receptor is mediated by G proteins which activate a phosphatidyl-inositol-calcium second messenger system. This chain is Vasopressin V1b receptor (Avpr1b), found in Mus musculus (Mouse).